A 360-amino-acid polypeptide reads, in one-letter code: DNA replication and repair protein RecF (360 aa).

G30–T37 provides a ligand contact to ATP.

The protein belongs to the RecF family.

The protein localises to the cytoplasm. The RecF protein is involved in DNA metabolism; it is required for DNA replication and normal SOS inducibility. RecF binds preferentially to single-stranded, linear DNA. It also seems to bind ATP. The polypeptide is DNA replication and repair protein RecF (Shewanella baltica (strain OS155 / ATCC BAA-1091)).